A 237-amino-acid polypeptide reads, in one-letter code: Large ribosomal subunit protein uL1 (237 aa).

Belongs to the universal ribosomal protein uL1 family. As to quaternary structure, part of the 50S ribosomal subunit.

Functionally, binds directly to 23S rRNA. The L1 stalk is quite mobile in the ribosome, and is involved in E site tRNA release. Protein L1 is also a translational repressor protein, it controls the translation of the L11 operon by binding to its mRNA. The protein is Large ribosomal subunit protein uL1 of Solibacter usitatus (strain Ellin6076).